The chain runs to 114 residues: Vesicle-associated membrane protein 2 (114 aa).

Pro residues predominate over residues 1–11 (MSAPAAGPPAA). The interval 1–31 (MSAPAAGPPAAAPGDGAPQGPPNLTSNRRLQ) is disordered. Residue Ser-2 is modified to N-acetylserine. The Cytoplasmic segment spans residues 2–92 (SAPAAGPPAA…KRKYWWKNMK (91 aa)). The v-SNARE coiled-coil homology domain occupies 29–89 (RLQQTQAQVD…AKLKRKYWWK (61 aa)). A helical; Anchor for type IV membrane protein transmembrane segment spans residues 93 to 111 (MMIIMGVICAIILIIIIVY). At 112–114 (FST) the chain is on the vesicular side.

The protein belongs to the synaptobrevin family.

It is found in the cytoplasmic vesicle. Its subcellular location is the secretory vesicle. It localises to the synaptic vesicle membrane. The protein resides in the cell membrane. Its function is as follows. Involved in the targeting and/or fusion of transport vesicles to their target membrane. Major SNARE protein of synaptic vesicles which mediates fusion of synaptic vesicles to release neurotransmitters. Essential for fast vesicular exocytosis and activity-dependent neurotransmitter release as well as fast endocytosis that mediates rapid reuse of synaptic vesicles. In Xenopus laevis (African clawed frog), this protein is Vesicle-associated membrane protein 2 (vamp2).